The chain runs to 213 residues: Pyrrolidone-carboxylate peptidase (213 aa).

Residues Glu-78, Cys-141, and His-165 contribute to the active site.

It belongs to the peptidase C15 family. In terms of assembly, homotetramer.

The protein localises to the cytoplasm. The catalysed reaction is Release of an N-terminal pyroglutamyl group from a polypeptide, the second amino acid generally not being Pro.. Its function is as follows. Removes 5-oxoproline from various penultimate amino acid residues except L-proline. The protein is Pyrrolidone-carboxylate peptidase of Finegoldia magna (strain ATCC 29328 / DSM 20472 / WAL 2508) (Peptostreptococcus magnus).